The chain runs to 88 residues: Small ribosomal subunit protein bS20 (88 aa).

Residues 1–27 form a disordered region; sequence MANSKSAKKRALQSEKRRQHNASRRSM.

The protein belongs to the bacterial ribosomal protein bS20 family.

Functionally, binds directly to 16S ribosomal RNA. The polypeptide is Small ribosomal subunit protein bS20 (Shewanella denitrificans (strain OS217 / ATCC BAA-1090 / DSM 15013)).